Consider the following 319-residue polypeptide: Fructokinase (319 aa).

The protein belongs to the carbohydrate kinase PfkB family. As to expression, expressed in swelling stolons and, at higher levels, in developing tubers. Low levels found in leaves and stems from tuberizing plants.

It carries out the reaction D-fructose + ATP = D-fructose 6-phosphate + ADP + H(+). Its pathway is glycan biosynthesis; starch biosynthesis. Its function is as follows. May play an important role in maintaining the flux of carbon towards starch formation. This chain is Fructokinase, found in Solanum tuberosum (Potato).